Here is a 521-residue protein sequence, read N- to C-terminus: Citrinin biosynthesis cluster MFS transporter ctnC (521 aa).

The segment at 1–29 (MKEEIDAPVSTDASGTDLENARDQPSGEK) is disordered. 8 helical membrane passes run 58 to 78 (SLITCIFSTLTIWVTFSSSVF), 95 to 115 (VMTLGTSLTVLGFTVGPLVWG), 124 to 144 (LKPLYIGYAIFIIFQVPVAVA), 155 to 175 (FFLGFFGTSALAIIPGALADF), 182 to 202 (AIAISLFSAATFVGPIFGPIM), 237 to 257 (WTAWITMIPASFFGIIAFLTL), 313 to 333 (ILVCMTIYISLIYGILYLFFV), and 349 to 369 (GIAALPFLGILVGVLMGCLLV). Asn-383 carries an N-linked (GlcNAc...) asparagine glycan. Transmembrane regions (helical) follow at residues 392–412 (LPPMIVAAILLPIGLFWFGWT), 417–437 (ISWAPQAIAGAPIGMGILMIW), 465–485 (AVSAAFPLFATAMYHKLGVDW), and 489–509 (LLGFLSIAMIPIPVIFYFYGA).

Belongs to the major facilitator superfamily. CAR1 family.

The protein localises to the membrane. MFS transporter; part of the gene cluster that mediates the biosynthesis the mycotoxin citrinin, a hepato-nephrotoxic compound to humans due to inhibition of respiration complex III. The protein is Citrinin biosynthesis cluster MFS transporter ctnC (ctnC) of Monascus purpureus (Red mold).